Here is a 471-residue protein sequence, read N- to C-terminus: 5-hydroxytryptamine receptor 2A (471 aa).

Over 1–80 (MEILCEDNIS…LQEKNWSALL (80 aa)) the chain is Extracellular. N-linked (GlcNAc...) asparagine glycosylation is found at N8, N38, N44, N51, and N54. A helical membrane pass occupies residues 81–97 (TTVVIILTIAGNILVIM). The Cytoplasmic portion of the chain corresponds to 98 to 111 (AVSLEKKLQNATNY). The helical transmembrane segment at 112–137 (FLMSLAIADMLLGFLVMPVSMLTILY) threads the bilayer. Residues 138 to 146 (GYRWPLPSK) are Extracellular-facing. A helical membrane pass occupies residues 147–171 (LCAVWIYLDVLFSTASIMHLCAISL). A disulfide bridge connects residues C148 and C227. D155 is a binding site for serotonin. Positions 172–174 (DRY) match the DRY motif; important for ligand-induced conformation changes motif. At 172–191 (DRYVAIQNPIHHSRFNSRTK) the chain is on the cytoplasmic side. A helical membrane pass occupies residues 192–215 (AFLKIIAVWTISVGISMPIPVFGL). Residues 216-232 (QDDSKVFKEGSCLLADD) lie on the Extracellular side of the membrane. A helical membrane pass occupies residues 233 to 258 (NFVLIGSFVAFFIPLTIMVITYFLTI). Residues 259 to 322 (KSLQKEATLC…QSISNEQKAC (64 aa)) are Cytoplasmic-facing. The residue at position 280 (S280) is a Phosphoserine. A helical membrane pass occupies residues 323–348 (KVLGIVFFLFVVMWCPFFITNIMAVI). Serotonin is bound at residue N343. Cysteines 349 and 353 form a disulfide. The Extracellular portion of the chain corresponds to 349–356 (CKESCNEN). Residues 357-382 (VIGALLNVFVWIGYLSSAVNPLVYTL) form a helical membrane-spanning segment. An NPxxY motif; important for ligand-induced conformation changes and signaling motif is present at residues 376 to 380 (NPLVY). Residues 383 to 471 (FNKTYRSAFS…ETVNEKVSCV (89 aa)) lie on the Cytoplasmic side of the membrane. Positions 469–471 (SCV) match the PDZ-binding motif.

This sequence belongs to the G-protein coupled receptor 1 family. Interacts (via C-terminus) with MPDZ and PATJ. May interact (via C-terminus) with MPP3, PRDX6, DLG4, DLG1, CASK, APBA1 and MAGI2. Interacts with GRM2 and DRD2; this may affect signaling. As to expression, detected in neurons in brain cortex. Detected in adult intestine, especially in mucosal epithelium, longitudinal and circular layers of muscularis externa and myenteric plexuses. Highly expressed in Paneth cells, and detected at lower levels in enterocytes (at protein level). Detected in neurons in the brain cortex.

The protein resides in the cell membrane. It is found in the cell projection. The protein localises to the dendrite. It localises to the axon. Its subcellular location is the cytoplasmic vesicle. The protein resides in the membrane. It is found in the caveola. The protein localises to the presynapse. G-protein coupled receptor activity is regulated by lipids: oleamide increases HTR2A-mediated activity. G-protein coupled receptor for 5-hydroxytryptamine (serotonin). Also functions as a receptor for various drugs and psychoactive substances, including mescaline, psilocybin, 1-(2,5-dimethoxy-4-iodophenyl)-2-aminopropane (DOI) and lysergic acid diethylamide (LSD). Ligand binding causes a conformation change that triggers signaling via guanine nucleotide-binding proteins (G proteins) and modulates the activity of downstream effectors. HTR2A is coupled to G(q)/G(11) G alpha proteins and activates phospholipase C-beta, releasing diacylglycerol (DAG) and inositol 1,4,5-trisphosphate (IP3) second messengers that modulate the activity of phosphatidylinositol 3-kinase and promote the release of Ca(2+) ions from intracellular stores, respectively. Beta-arrestin family members inhibit signaling via G proteins and mediate activation of alternative signaling pathways. Affects neural activity, perception, cognition and mood. Plays a role in the regulation of behavior, including responses to anxiogenic situations and psychoactive substances. Plays a role in intestinal smooth muscle contraction, and may play a role in arterial vasoconstriction. This chain is 5-hydroxytryptamine receptor 2A (Htr2a), found in Mus musculus (Mouse).